The following is a 77-amino-acid chain: Acyl carrier protein (77 aa).

Residues 2–77 (SDVADRVKKI…DAVKFISEAS (76 aa)) enclose the Carrier domain. An O-(pantetheine 4'-phosphoryl)serine modification is found at S37.

The protein belongs to the acyl carrier protein (ACP) family. 4'-phosphopantetheine is transferred from CoA to a specific serine of apo-ACP by AcpS. This modification is essential for activity because fatty acids are bound in thioester linkage to the sulfhydryl of the prosthetic group.

The protein resides in the cytoplasm. It functions in the pathway lipid metabolism; fatty acid biosynthesis. Its function is as follows. Carrier of the growing fatty acid chain in fatty acid biosynthesis. In Ruegeria sp. (strain TM1040) (Silicibacter sp.), this protein is Acyl carrier protein.